We begin with the raw amino-acid sequence, 947 residues long: Probable outer membrane protein pmp19 (947 aa).

A signal peptide spans Met1–Ser19. An Autotransporter domain is found at Ile672–Phe947.

Belongs to the PMP outer membrane protein family.

Its subcellular location is the secreted. It localises to the cell wall. The protein localises to the cell outer membrane. This Chlamydia pneumoniae (Chlamydophila pneumoniae) protein is Probable outer membrane protein pmp19 (pmp19).